The chain runs to 152 residues: Nucleoside diphosphate kinase (152 aa).

Lys11, Phe59, Arg87, Thr93, Arg104, and Asn114 together coordinate ATP. Catalysis depends on His117, which acts as the Pros-phosphohistidine intermediate.

It belongs to the NDK family. Homotetramer. It depends on Mg(2+) as a cofactor.

The protein localises to the cytoplasm. The enzyme catalyses a 2'-deoxyribonucleoside 5'-diphosphate + ATP = a 2'-deoxyribonucleoside 5'-triphosphate + ADP. It carries out the reaction a ribonucleoside 5'-diphosphate + ATP = a ribonucleoside 5'-triphosphate + ADP. Functionally, major role in the synthesis of nucleoside triphosphates other than ATP. The ATP gamma phosphate is transferred to the NDP beta phosphate via a ping-pong mechanism, using a phosphorylated active-site intermediate. The polypeptide is Nucleoside diphosphate kinase (Prochlorococcus marinus (strain AS9601)).